Reading from the N-terminus, the 429-residue chain is Enolase (429 aa).

Gln167 provides a ligand contact to (2R)-2-phosphoglycerate. Residue Glu209 is the Proton donor of the active site. Mg(2+)-binding residues include Asp246, Glu289, and Asp316. Lys341, Arg370, Ser371, and Lys392 together coordinate (2R)-2-phosphoglycerate. The Proton acceptor role is filled by Lys341.

The protein belongs to the enolase family. In terms of assembly, component of the RNA degradosome, a multiprotein complex involved in RNA processing and mRNA degradation. It depends on Mg(2+) as a cofactor.

It is found in the cytoplasm. The protein localises to the secreted. The protein resides in the cell surface. The catalysed reaction is (2R)-2-phosphoglycerate = phosphoenolpyruvate + H2O. It functions in the pathway carbohydrate degradation; glycolysis; pyruvate from D-glyceraldehyde 3-phosphate: step 4/5. Catalyzes the reversible conversion of 2-phosphoglycerate (2-PG) into phosphoenolpyruvate (PEP). It is essential for the degradation of carbohydrates via glycolysis. In Ectopseudomonas mendocina (strain ymp) (Pseudomonas mendocina), this protein is Enolase.